The sequence spans 334 residues: Glycerol-3-phosphate dehydrogenase [NAD(P)+] (334 aa).

NADPH contacts are provided by serine 11, tryptophan 12, arginine 32, and lysine 106. Lysine 106 and glycine 136 together coordinate sn-glycerol 3-phosphate. Residue alanine 140 participates in NADPH binding. Sn-glycerol 3-phosphate contacts are provided by lysine 191, aspartate 244, serine 254, arginine 255, and asparagine 256. Catalysis depends on lysine 191, which acts as the Proton acceptor. Position 255 (arginine 255) interacts with NADPH. The NADPH site is built by valine 279 and glutamate 281.

The protein belongs to the NAD-dependent glycerol-3-phosphate dehydrogenase family.

The protein resides in the cytoplasm. It carries out the reaction sn-glycerol 3-phosphate + NAD(+) = dihydroxyacetone phosphate + NADH + H(+). The catalysed reaction is sn-glycerol 3-phosphate + NADP(+) = dihydroxyacetone phosphate + NADPH + H(+). It functions in the pathway membrane lipid metabolism; glycerophospholipid metabolism. Its function is as follows. Catalyzes the reduction of the glycolytic intermediate dihydroxyacetone phosphate (DHAP) to sn-glycerol 3-phosphate (G3P), the key precursor for phospholipid synthesis. The protein is Glycerol-3-phosphate dehydrogenase [NAD(P)+] of Parafrankia sp. (strain EAN1pec).